The primary structure comprises 123 residues: Large ribosomal subunit protein uL24 (123 aa).

Belongs to the universal ribosomal protein uL24 family. In terms of assembly, part of the 50S ribosomal subunit.

One of two assembly initiator proteins, it binds directly to the 5'-end of the 23S rRNA, where it nucleates assembly of the 50S subunit. Its function is as follows. One of the proteins that surrounds the polypeptide exit tunnel on the outside of the subunit. In Kineococcus radiotolerans (strain ATCC BAA-149 / DSM 14245 / SRS30216), this protein is Large ribosomal subunit protein uL24.